Here is a 347-residue protein sequence, read N- to C-terminus: D-alanine--D-alanine ligase (347 aa).

In terms of domain architecture, ATP-grasp spans 134–332 (KLYAKDLGVK…LAQSLPKTPK (199 aa)). 161–216 (LMNFNFPFIIKPNNAGSSLGVNVVKEEKELVYALDGAFEYSKEVLIEPFIQGVKEY) contacts ATP. Residues Asp-288, Glu-300, and Asn-302 each contribute to the Mg(2+) site.

The protein belongs to the D-alanine--D-alanine ligase family. Requires Mg(2+) as cofactor. Mn(2+) serves as cofactor.

The protein resides in the cytoplasm. It carries out the reaction 2 D-alanine + ATP = D-alanyl-D-alanine + ADP + phosphate + H(+). Its pathway is cell wall biogenesis; peptidoglycan biosynthesis. Its function is as follows. Cell wall formation. The protein is D-alanine--D-alanine ligase of Helicobacter pylori (strain ATCC 700392 / 26695) (Campylobacter pylori).